The primary structure comprises 702 residues: Elongation factor G (702 aa).

The tr-type G domain maps to Ser8 to Asn290. GTP contacts are provided by residues Ala17–Thr24, Asp88–His92, and Asn142–Asp145.

Belongs to the TRAFAC class translation factor GTPase superfamily. Classic translation factor GTPase family. EF-G/EF-2 subfamily.

The protein localises to the cytoplasm. Functionally, catalyzes the GTP-dependent ribosomal translocation step during translation elongation. During this step, the ribosome changes from the pre-translocational (PRE) to the post-translocational (POST) state as the newly formed A-site-bound peptidyl-tRNA and P-site-bound deacylated tRNA move to the P and E sites, respectively. Catalyzes the coordinated movement of the two tRNA molecules, the mRNA and conformational changes in the ribosome. This is Elongation factor G from Buchnera aphidicola subsp. Acyrthosiphon pisum (strain 5A).